We begin with the raw amino-acid sequence, 1169 residues long: Integrin alpha-X (1169 aa).

Positions 1-19 (MSCTWIAFLLLLGFVSCLG) are cleaved as a signal peptide. The Extracellular portion of the chain corresponds to 20–1116 (FNLDAEKLTH…EMYKVHNPVP (1097 aa)). FG-GAP repeat units lie at residues 23–78 (DAEK…NCEP) and 79–138 (ISLQ…QSQN). A disulfide bond links Cys69 and Cys76. Asn89 carries N-linked (GlcNAc...) asparagine glycosylation. 2 disulfide bridges follow: Cys108–Cys126 and Cys116–Cys146. The 179-residue stretch at 152-330 (DIVFLIDGSG…DALKDIENQL (179 aa)) folds into the VWFA domain. 4 residues coordinate Mg(2+): Asp158, Ser160, Ser162, and Asp260. Residue Asn267 is glycosylated (N-linked (GlcNAc...) asparagine). FG-GAP repeat units follow at residues 341–392 (ETPS…PTFI), 393–444 (NMSQ…SRHW), 445–505 (RPKS…GSRW), 508–566 (GTTL…QDIA), and 571–631 (QRIS…FTPA). Residue Asn393 is glycosylated (N-linked (GlcNAc...) asparagine). Positions 467, 469, 471, and 475 each coordinate Ca(2+). A disulfide bond links Cys496 and Cys507. Asp531, Asn533, Asp535, Asp539, Asp594, Asp598, and Asp602 together coordinate Ca(2+). Disulfide bonds link Cys640–Cys721 and Cys656–Cys711. Asn734 carries N-linked (GlcNAc...) asparagine glycosylation. Cystine bridges form between Cys770/Cys776 and Cys858/Cys873. The N-linked (GlcNAc...) asparagine glycan is linked to Asn949. 2 disulfides stabilise this stretch: Cys1007/Cys1031 and Cys1036/Cys1041. Asn1059 and Asn1084 each carry an N-linked (GlcNAc...) asparagine glycan. The chain crosses the membrane as a helical span at residues 1117 to 1137 (LIVGSSVGGLLLLAIITAILY). Over 1138–1169 (KAGFFKRQYKEMLEEANGQFVSDGTPTPQVAQ) the chain is Cytoplasmic. The GFFKR motif motif lies at 1140-1144 (GFFKR).

This sequence belongs to the integrin alpha chain family. Heterodimer of an alpha and a beta subunit. Alpha-X associates with beta-2.

Its subcellular location is the membrane. Its function is as follows. Integrin alpha-X/beta-2 is a receptor for fibrinogen. It recognizes the sequence G-P-R in fibrinogen. It mediates cell-cell interaction during inflammatory responses. It is especially important in monocyte adhesion and chemotaxis. In Mus musculus (Mouse), this protein is Integrin alpha-X (Itgax).